The following is a 591-amino-acid chain: Transcription factor COE1 (591 aa).

Met-1 bears the N-acetylmethionine mark. The segment covering 1 to 14 has biased composition (polar residues); that stretch reads MFGIQESIQRSGSS. The disordered stretch occupies residues 1–21; the sequence is MFGIQESIQRSGSSMKEEPLG. A Glycyl lysine isopeptide (Lys-Gly) (interchain with G-Cter in SUMO1); alternate cross-link involves residue Lys-16. Lys-16 participates in a covalent cross-link: Glycyl lysine isopeptide (Lys-Gly) (interchain with G-Cter in SUMO2); alternate. The segment at 63-66 is interaction with DNA; that stretch reads RKSN. The C5-type zinc-finger motif lies at 151–170; it reads CRVLLTHEIMCSRCCDKKSC. Interaction with DNA regions lie at residues 197–204 and 236–239; these read NCLKNAGN and NNSK. In terms of domain architecture, IPT/TIG spans 262-345; the sequence is PCIKAISPSE…KGTPGRFIYT (84 aa). The interval 457-480 is disordered; the sequence is GFTRNSSSVSPHGYVPSTTPQQTN.

This sequence belongs to the COE family. Homodimer. Interacts with ZNF423 and ZNF521, leading to prevent EBF1 to bind DNA and activate target genes. Interacts with CCR4-NOT component CNOT3. As to quaternary structure, (Microbial infection) Interacts with Epstein-barr virus protein EBNA2.

It is found in the nucleus. In terms of biological role, key pioneer transcription factor of B-cell specification and commitment. Recognizes variations of the palindromic sequence 5'-ATTCCCNNGGGAATT-3'. Operates in a transcription factor network to activate B-cell-specific genes and repress genes associated with alternative cell fates. For instance, positively regulates many B-cell specific genes including BCR or CD40 while repressing genes that direct cells into alternative lineages, including GATA3 and TCF7 for the T-cell lineage. In addition to its role during lymphopoiesis, controls the thermogenic gene program in adipocytes during development and in response to environmental cold. Its function is as follows. (Microbial infection) Acts as a chromatin anchor for Epstein-Barr virus EBNA2 to mediate the assembly of EBNA2 chromatin complexes in B-cells. In addition, binds to the viral LMP1 proximal promoter and promotes its expression during latency. The chain is Transcription factor COE1 (EBF1) from Homo sapiens (Human).